A 316-amino-acid chain; its full sequence is Probable 5-dehydro-4-deoxyglucarate dehydratase (316 aa).

It belongs to the DapA family.

It carries out the reaction 5-dehydro-4-deoxy-D-glucarate + H(+) = 2,5-dioxopentanoate + CO2 + H2O. Its pathway is carbohydrate acid metabolism; D-glucarate degradation; 2,5-dioxopentanoate from D-glucarate: step 2/2. In Corynebacterium glutamicum (strain R), this protein is Probable 5-dehydro-4-deoxyglucarate dehydratase.